Reading from the N-terminus, the 256-residue chain is Ribonuclease 3 (256 aa).

The RNase III domain maps to 3-125; sequence LDALQQRLGY…IVGAVFLDAG (123 aa). E38 contacts Mg(2+). Residue D42 is part of the active site. Mg(2+) is bound by residues D111 and E114. E114 is a catalytic residue. The 71-residue stretch at 152–222 folds into the DRBM domain; the sequence is DAKTLLQEYL…AKLALDEVQK (71 aa). The disordered stretch occupies residues 229–256; the sequence is KRSRAERTGKTRKQPVPPDPQLSLRLKE.

Belongs to the ribonuclease III family. In terms of assembly, homodimer. Mg(2+) serves as cofactor.

Its subcellular location is the cytoplasm. It carries out the reaction Endonucleolytic cleavage to 5'-phosphomonoester.. In terms of biological role, digests double-stranded RNA. Involved in the processing of primary rRNA transcript to yield the immediate precursors to the large and small rRNAs (23S and 16S). Processes some mRNAs, and tRNAs when they are encoded in the rRNA operon. Processes pre-crRNA and tracrRNA of type II CRISPR loci if present in the organism. In Cupriavidus pinatubonensis (strain JMP 134 / LMG 1197) (Cupriavidus necator (strain JMP 134)), this protein is Ribonuclease 3.